Consider the following 341-residue polypeptide: Probable long-chain-alcohol O-fatty-acyltransferase 1 (341 aa).

The next 8 helical transmembrane spans lie at 7–27, 36–56, 58–78, 120–140, 149–169, 233–253, 261–281, and 293–313; these read NLIE…YISS, LLSI…LSCV, FCAI…LLFA, PMPK…LHVY, FVVL…VLVF, MFAG…LLYF, TWEV…EIAV, and AVSG…LFLA.

The protein belongs to the wax synthase family.

It localises to the membrane. It catalyses the reaction a long chain fatty alcohol + a fatty acyl-CoA = a wax ester + CoA. Catalyzes the final step in the synthesis of long-chain linear esters (waxes). The polypeptide is Probable long-chain-alcohol O-fatty-acyltransferase 1 (AT1) (Arabidopsis thaliana (Mouse-ear cress)).